The sequence spans 239 residues: Ribosomal RNA small subunit methyltransferase G (239 aa).

Residues Gly-80, Phe-85, 103 to 105 (EAS), 131 to 132 (AE), and Arg-150 contribute to the S-adenosyl-L-methionine site.

The protein belongs to the methyltransferase superfamily. RNA methyltransferase RsmG family.

It localises to the cytoplasm. In terms of biological role, specifically methylates the N7 position of a guanine in 16S rRNA. In Caldanaerobacter subterraneus subsp. tengcongensis (strain DSM 15242 / JCM 11007 / NBRC 100824 / MB4) (Thermoanaerobacter tengcongensis), this protein is Ribosomal RNA small subunit methyltransferase G.